The following is a 102-amino-acid chain: Signal recognition particle 19 kDa protein (102 aa).

The protein belongs to the SRP19 family. Part of the signal recognition particle protein translocation system, which is composed of SRP and FtsY. Archaeal SRP consists of a 7S RNA molecule of 300 nucleotides and two protein subunits: SRP54 and SRP19.

It is found in the cytoplasm. In terms of biological role, involved in targeting and insertion of nascent membrane proteins into the cytoplasmic membrane. Binds directly to 7S RNA and mediates binding of the 54 kDa subunit of the SRP. The polypeptide is Signal recognition particle 19 kDa protein (Saccharolobus solfataricus (strain ATCC 35092 / DSM 1617 / JCM 11322 / P2) (Sulfolobus solfataricus)).